We begin with the raw amino-acid sequence, 110 residues long: Protein ripply3 (110 aa).

The short motif at 18–21 (WRPW) is the WRPW motif element. Residues 50 to 85 (HPVRLFLPRSRMQEYLSRLGSSVLASFPVQATLHFY) form a ripply homology domain region. Over residues 87 to 99 (DEDSSSEEEEDEE) the composition is skewed to acidic residues. The segment at 87 to 110 (DEDSSSEEEEDEEHANTRCRLWRP) is disordered.

Belongs to the ripply family.

It is found in the nucleus. In terms of biological role, probable transcriptional regulator involved in developmental processes. This chain is Protein ripply3 (ripply3), found in Danio rerio (Zebrafish).